Reading from the N-terminus, the 208-residue chain is Protein-L-isoaspartate O-methyltransferase (208 aa).

S59 is a catalytic residue.

It belongs to the methyltransferase superfamily. L-isoaspartyl/D-aspartyl protein methyltransferase family.

Its subcellular location is the cytoplasm. The enzyme catalyses [protein]-L-isoaspartate + S-adenosyl-L-methionine = [protein]-L-isoaspartate alpha-methyl ester + S-adenosyl-L-homocysteine. In terms of biological role, catalyzes the methyl esterification of L-isoaspartyl residues in peptides and proteins that result from spontaneous decomposition of normal L-aspartyl and L-asparaginyl residues. It plays a role in the repair and/or degradation of damaged proteins. This chain is Protein-L-isoaspartate O-methyltransferase, found in Salmonella paratyphi A (strain ATCC 9150 / SARB42).